Consider the following 1046-residue polypeptide: uncharacterized protein (1046 aa).

Positions 594–615 (LNSIPSDSSSSGSSRKSSPRGS) are enriched in low complexity. Positions 594–622 (LNSIPSDSSSSGSSRKSSPRGSPNLGEAP) are disordered.

This is an uncharacterized protein from Invertebrate iridescent virus 6 (IIV-6).